We begin with the raw amino-acid sequence, 246 residues long: Homeobox protein SIX6 (246 aa).

Residues 128–187 constitute a DNA-binding region (homeobox); sequence GEQKTHCFKERTRHLLREWYLQDPYPNPSKKRELAQATGLTPTQVGNWFKNRRQRDRAAA. The tract at residues 190–246 is disordered; that stretch reads NRLQQQVLSQGSGRALRAEGDGTPEVLGVATSPAASLSSKAATSAISITSSDSECDI. Over residues 191–201 the composition is skewed to polar residues; sequence RLQQQVLSQGS. Residue threonine 212 is modified to Phosphothreonine. The span at 219-246 shows a compositional bias: low complexity; the sequence is ATSPAASLSSKAATSAISITSSDSECDI. A phosphoserine mark is found at serine 221, serine 225, serine 227, and serine 228.

It belongs to the SIX/Sine oculis homeobox family. As to quaternary structure, interacts with TLE4 and TLE5. As to expression, expressed in the developing and adult retina. Also expressed in the hypothalamic and the pituitary regions.

It localises to the nucleus. In terms of biological role, may be involved in eye development. In Homo sapiens (Human), this protein is Homeobox protein SIX6 (SIX6).